The following is a 279-amino-acid chain: Urease accessory protein UreD (279 aa).

This sequence belongs to the UreD family. UreD, UreF and UreG form a complex that acts as a GTP-hydrolysis-dependent molecular chaperone, activating the urease apoprotein by helping to assemble the nickel containing metallocenter of UreC. The UreE protein probably delivers the nickel.

Its subcellular location is the cytoplasm. In terms of biological role, required for maturation of urease via the functional incorporation of the urease nickel metallocenter. The protein is Urease accessory protein UreD of Rhodopseudomonas palustris (strain HaA2).